Here is a 464-residue protein sequence, read N- to C-terminus: DNA primase DnaG (464 aa).

One can recognise a Toprim domain in the interval Asp171–Lys245. Residues Glu177, Asp219, and Asp221 each contribute to the Mg(2+) site.

This sequence belongs to the archaeal DnaG primase family. In terms of assembly, forms a ternary complex with MCM helicase and DNA. Requires Mg(2+) as cofactor.

It carries out the reaction ssDNA + n NTP = ssDNA/pppN(pN)n-1 hybrid + (n-1) diphosphate.. RNA polymerase that catalyzes the synthesis of short RNA molecules used as primers for DNA polymerase during DNA replication. The sequence is that of DNA primase DnaG from Methanococcus aeolicus (strain ATCC BAA-1280 / DSM 17508 / OCM 812 / Nankai-3).